The primary structure comprises 393 residues: MQTSHYAAEKDMQDAAPRLTFTLRDEERLMMKIGVFVPIGNNGWLISTHAPQYMPTFELNKAIVQKAEHYHFDFALSMIKLRGFGGKTEFWDHNLESFTLMAGLAAVTSRIQIYATAATLTLPPAIVARMAATIDSISGGRFGVNLVTGWQKPEYEQMGIWPGDDYFSRRYDYLTEYVQVLRDLWGSGKSDFKGDFFTMDDCRVSPQPSVPMKVICAGQSDAGMAFSARYADFNFCFGKGVNTPTAFAPTAARMKQAAEQTGRDVGSYVLFMVIADETDDAARAKWEHYKAGADEEALSWLTEQSQKDTRSGTDTNVRQMADPTSAVNINMGTLVGSYASVARMLDEVASVPGAEGVLLTFDDFLSGIENFGERIQPLMQCRAHLPALTQEVA.

FMN-binding positions include 79-80 (IK), N145, E154, 170-171 (RY), and S220.

Belongs to the NtaA/SnaA/DszA monooxygenase family. RutA subfamily.

It carries out the reaction uracil + FMNH2 + NADH + O2 = (Z)-3-ureidoacrylate + FMN + NAD(+) + H2O + H(+). The enzyme catalyses thymine + FMNH2 + NADH + O2 = (Z)-2-methylureidoacrylate + FMN + NAD(+) + H2O + H(+). In terms of biological role, catalyzes the pyrimidine ring opening between N-3 and C-4 by an unusual flavin hydroperoxide-catalyzed mechanism, adding oxygen atoms in the process to yield ureidoacrylate peracid, that immediately reacts with FMN forming ureidoacrylate and FMN-N(5)-oxide. The FMN-N(5)-oxide reacts spontaneously with NADH to produce FMN. Requires the flavin reductase RutF to regenerate FMN in vivo. The chain is Pyrimidine monooxygenase RutA from Escherichia coli O18:K1:H7 (strain IHE3034 / ExPEC).